Consider the following 362-residue polypeptide: Holliday junction branch migration complex subunit RuvB (362 aa).

A large ATPase domain (RuvB-L) region spans residues 4-186; it reads PDRPQRLVEQ…FGIPLRMQFY (183 aa). Residues I25, R26, G67, K70, T71, T72, 133 to 135, R176, Y186, and R223 each bind ATP; that span reads EDF. A Mg(2+)-binding site is contributed by T71. A small ATPAse domain (RuvB-S) region spans residues 187–257; the sequence is EPEELQLIVA…AAGGALTRLE (71 aa). A head domain (RuvB-H) region spans residues 260 to 362; the sequence is RLGFDAMDRR…GTPEGEGEDV (103 aa). Positions 296, 315, and 320 each coordinate DNA.

This sequence belongs to the RuvB family. Homohexamer. Forms an RuvA(8)-RuvB(12)-Holliday junction (HJ) complex. HJ DNA is sandwiched between 2 RuvA tetramers; dsDNA enters through RuvA and exits via RuvB. An RuvB hexamer assembles on each DNA strand where it exits the tetramer. Each RuvB hexamer is contacted by two RuvA subunits (via domain III) on 2 adjacent RuvB subunits; this complex drives branch migration. In the full resolvosome a probable DNA-RuvA(4)-RuvB(12)-RuvC(2) complex forms which resolves the HJ.

The protein resides in the cytoplasm. It catalyses the reaction ATP + H2O = ADP + phosphate + H(+). The RuvA-RuvB-RuvC complex processes Holliday junction (HJ) DNA during genetic recombination and DNA repair, while the RuvA-RuvB complex plays an important role in the rescue of blocked DNA replication forks via replication fork reversal (RFR). RuvA specifically binds to HJ cruciform DNA, conferring on it an open structure. The RuvB hexamer acts as an ATP-dependent pump, pulling dsDNA into and through the RuvAB complex. RuvB forms 2 homohexamers on either side of HJ DNA bound by 1 or 2 RuvA tetramers; 4 subunits per hexamer contact DNA at a time. Coordinated motions by a converter formed by DNA-disengaged RuvB subunits stimulates ATP hydrolysis and nucleotide exchange. Immobilization of the converter enables RuvB to convert the ATP-contained energy into a lever motion, pulling 2 nucleotides of DNA out of the RuvA tetramer per ATP hydrolyzed, thus driving DNA branch migration. The RuvB motors rotate together with the DNA substrate, which together with the progressing nucleotide cycle form the mechanistic basis for DNA recombination by continuous HJ branch migration. Branch migration allows RuvC to scan DNA until it finds its consensus sequence, where it cleaves and resolves cruciform DNA. This chain is Holliday junction branch migration complex subunit RuvB, found in Rhodospirillum centenum (strain ATCC 51521 / SW).